A 222-amino-acid chain; its full sequence is Sororin-like protein (222 aa).

Positions 1–189 (MEAPRSVGGR…VKQEKEDPVS (189 aa)) are disordered. Positions 24-33 (SRSSQQSSSS) are enriched in low complexity. The span at 47-60 (RLVEQTTLKEKPKD) shows a compositional bias: basic and acidic residues. Residues 88–105 (ADLASPASAPSRPQTSRS) are compositionally biased toward low complexity. The Nuclear localization signal signature appears at 155 to 162 (GKKTRQAS). The span at 167–179 (KTLKVAPKKRQRT) shows a compositional bias: basic residues. A C-terminal Sororin domain region spans residues 192–214 (CQDYIEKQKAYFAEIDAFELPVE).

It belongs to the sororin family.

The protein resides in the nucleus. In terms of biological role, regulator of sister chromatid cohesion in mitosis stabilizing cohesin complex association with chromatin. Antagonizes the action of WAPL proteins (WAPL1 and WAPL2) which stimulates cohesin dissociation from chromatin, particularly during somatic division in root cells and meiocytes during anaphase I. Required for centromeric sister chromatid cohesion during male meiosis (microsporogenesis). Cohesion ensures that chromosome partitioning is accurate in dividing cells and may play an important role in DNA repair. In Arabidopsis thaliana (Mouse-ear cress), this protein is Sororin-like protein.